Consider the following 82-residue polypeptide: Small ribosomal subunit protein bS16 (82 aa).

This sequence belongs to the bacterial ribosomal protein bS16 family.

This is Small ribosomal subunit protein bS16 from Vibrio campbellii (strain ATCC BAA-1116).